Here is a 171-residue protein sequence, read N- to C-terminus: S-ribosylhomocysteine lyase (171 aa).

Residues His54, His58, and Cys128 each coordinate Fe cation.

The protein belongs to the LuxS family. Homodimer. Requires Fe cation as cofactor.

It catalyses the reaction S-(5-deoxy-D-ribos-5-yl)-L-homocysteine = (S)-4,5-dihydroxypentane-2,3-dione + L-homocysteine. Its function is as follows. Involved in the synthesis of autoinducer 2 (AI-2) which is secreted by bacteria and is used to communicate both the cell density and the metabolic potential of the environment. The regulation of gene expression in response to changes in cell density is called quorum sensing. Catalyzes the transformation of S-ribosylhomocysteine (RHC) to homocysteine (HC) and 4,5-dihydroxy-2,3-pentadione (DPD). This chain is S-ribosylhomocysteine lyase, found in Salmonella agona (strain SL483).